The chain runs to 389 residues: UDP-D-apiose/UDP-D-xylose synthase 2 (389 aa).

Residues Phe28, Ile29, Asp49, Asn76, Ile77, and Leu96 each coordinate NAD(+). 5 residues coordinate UDP-alpha-D-glucuronate: Tyr105, Thr139, Glu141, Arg182, and Tyr185. Residues Tyr185 and Lys189 each coordinate NAD(+). Tyr185 (proton acceptor) is an active-site residue. Asn214 provides a ligand contact to UDP-alpha-D-glucuronate. The NAD(+) site is built by Trp215 and Arg235. UDP-alpha-D-glucuronate contacts are provided by Lys251, Val253, Arg260, Tyr331, Tyr335, Asp337, and Arg341.

The protein belongs to the NAD(P)-dependent epimerase/dehydratase family. Homodimer and heterodimer with AXS1. It depends on NAD(+) as a cofactor. Widely expressed with stronger expression in dark-grown seedlings, leaves and stems, and lower levels in flowers, siliques, pistils, pollen and roots.

It is found in the cytoplasm. It carries out the reaction UDP-alpha-D-glucuronate + H(+) = UDP-alpha-D-xylose + CO2. The enzyme catalyses UDP-alpha-D-glucuronate + H(+) = UDP-alpha-D-apiose + CO2. Functionally, together with AXS1, catalyzes the conversion of UDP-D-glucuronate into a mixture of UDP-D-apiose (UDP-Api) as the main product and UDP-D-xylose to a lesser extent, via a cycle of oxidation and reduction. D-Apiose (3-C-hydroxymethyl-d-erythrose) is the only plant cell wall monosaccharide with a branched carbon skeleton and is found in rhamnogalacturonan II (RG-II), apiogalacturonan, and several apioglycosides. The protein is UDP-D-apiose/UDP-D-xylose synthase 2 of Arabidopsis thaliana (Mouse-ear cress).